The following is an 83-amino-acid chain: Beta-toxin Ct25 (83 aa).

A signal peptide spans 1 to 18 (MKVLILIIASVLLIGVEC). In terms of domain architecture, LCN-type CS-alpha/beta spans 19 to 81 (KDGYPKNSEG…VWDSATNKCG (63 aa)). Intrachain disulfides connect C29–C80, C33–C54, C40–C61, and C44–C63. Glycine amide is present on G81.

Belongs to the long (4 C-C) scorpion toxin superfamily. Sodium channel inhibitor family. Beta subfamily. In terms of tissue distribution, expressed by the venom gland.

It localises to the secreted. In terms of biological role, beta toxins bind voltage-independently at site-4 of sodium channels (Nav) and shift the voltage of activation toward more negative potentials thereby affecting sodium channel activation and promoting spontaneous and repetitive firing. This chain is Beta-toxin Ct25, found in Centruroides tecomanus (Scorpion).